A 230-amino-acid polypeptide reads, in one-letter code: Orotidine 5'-phosphate decarboxylase (230 aa).

Substrate is bound by residues Asp12, Lys34, 61-70 (DMKLLDIDNT), Thr116, Arg177, Gln186, and Arg207. The active-site Proton donor is the Lys63.

This sequence belongs to the OMP decarboxylase family. Type 1 subfamily. In terms of assembly, homodimer.

The catalysed reaction is orotidine 5'-phosphate + H(+) = UMP + CO2. It functions in the pathway pyrimidine metabolism; UMP biosynthesis via de novo pathway; UMP from orotate: step 2/2. Its function is as follows. Catalyzes the decarboxylation of orotidine 5'-monophosphate (OMP) to uridine 5'-monophosphate (UMP). This Rhizobium rhizogenes (strain K84 / ATCC BAA-868) (Agrobacterium radiobacter) protein is Orotidine 5'-phosphate decarboxylase.